Reading from the N-terminus, the 306-residue chain is Non-specific ribonucleoside hydrolase RihC (306 aa).

His-235 is a catalytic residue.

This sequence belongs to the IUNH family. RihC subfamily.

Functionally, hydrolyzes both purine and pyrimidine ribonucleosides with a broad-substrate specificity. In Salmonella dublin (strain CT_02021853), this protein is Non-specific ribonucleoside hydrolase RihC.